A 201-amino-acid chain; its full sequence is Histidinol dehydrogenase (201 aa).

Belongs to the histidinol dehydrogenase family. Homodimer. Zn(2+) serves as cofactor.

It carries out the reaction L-histidinol + 2 NAD(+) + H2O = L-histidine + 2 NADH + 3 H(+). The protein operates within amino-acid biosynthesis; L-histidine biosynthesis; L-histidine from 5-phospho-alpha-D-ribose 1-diphosphate: step 9/9. Functionally, catalyzes the sequential NAD-dependent oxidations of L-histidinol to L-histidinaldehyde and then to L-histidine. The polypeptide is Histidinol dehydrogenase (hisD) (Buchnera aphidicola subsp. Diuraphis noxia).